The sequence spans 294 residues: Glycine--tRNA ligase alpha subunit (294 aa).

The protein belongs to the class-II aminoacyl-tRNA synthetase family. Tetramer of two alpha and two beta subunits.

The protein localises to the cytoplasm. It catalyses the reaction tRNA(Gly) + glycine + ATP = glycyl-tRNA(Gly) + AMP + diphosphate. In Sulfurovum sp. (strain NBC37-1), this protein is Glycine--tRNA ligase alpha subunit.